Here is an 86-residue protein sequence, read N- to C-terminus: Large ribosomal subunit protein bL27 (86 aa).

Residues 1–26 (MASKKAGGSTKNGRDSQSKRLGVKRF) are disordered.

This sequence belongs to the bacterial ribosomal protein bL27 family.

In Bdellovibrio bacteriovorus (strain ATCC 15356 / DSM 50701 / NCIMB 9529 / HD100), this protein is Large ribosomal subunit protein bL27.